The primary structure comprises 523 residues: Volkensin (523 aa).

Active-site residues include Tyr74, Tyr113, Glu162, and Arg165. Position 111–113 (111–113) interacts with AMP; the sequence is GGY. 2 disulfide bridges follow: Cys245/Cys269 and Cys285/Cys304. Residues 251-265 constitute a propeptide, linker peptide; sequence QSDSPLVIRSFVDRN. The region spanning 270–397 is the Ricin B-type lectin 1 domain; it reads PSGETTAFIV…YAASQAWRVT (128 aa). A carbohydrate contacts are provided by residues 287 to 291, Gln300, Lys305, and Asn311; that span reads DVKVE. A disulfide bond links Cys328 and Cys343. The a carbohydrate site is built by Asn358 and Asn398. N-linked (GlcNAc...) asparagine glycans are attached at residues Asn358 and Asn398. The region spanning 400–523 is the Ricin B-type lectin 2 domain; the sequence is TVPTVTTIVG…HGNSNQQWFL (124 aa). 2 disulfides stabilise this stretch: Cys414/Cys427 and Cys453/Cys471.

This sequence in the N-terminal section; belongs to the ribosome-inactivating protein family. Type 2 RIP subfamily. In terms of assembly, disulfide-linked dimer of A and B chains. N-glycosylated. Contains mannose and galactose. Expressed in roots (at protein level). Expressed in seeds (at protein level).

It carries out the reaction Endohydrolysis of the N-glycosidic bond at one specific adenosine on the 28S rRNA.. Its activity is regulated as follows. Hemagglutinating activity is inhibited by galactose and structurally related sugars. Its function is as follows. Has N-glycosidase activity and is responsible for inhibiting protein synthesis through the catalytic inactivation of 60S ribosomal subunits by removing a specific adenine of 28S rRNA. Inhibits GTP-dependent binding of EF2 (elongation factor 2) to ribosomes. In terms of biological role, binds to cell receptors and probably facilitates the entry into the cell of the A chain. Also acts as a galactose-specific lectin responsible for cell agglutination. The polypeptide is Volkensin (Adenia volkensii (Kilyambiti plant)).